We begin with the raw amino-acid sequence, 34 residues long: Colipase (34 aa).

Intrachain disulfides connect cysteine 12-cysteine 23 and cysteine 18-cysteine 34.

Belongs to the colipase family. As to quaternary structure, forms a 1:1 stoichiometric complex with pancreatic lipase. Expressed by the pancreas.

It is found in the secreted. Its function is as follows. Colipase is a cofactor of pancreatic lipase. It allows the lipase to anchor itself to the lipid-water interface. Without colipase the enzyme is washed off by bile salts, which have an inhibitory effect on the lipase. The protein is Colipase (CLPS) of Gallus gallus (Chicken).